Reading from the N-terminus, the 480-residue chain is Protein nucleotidyltransferase YdiU (480 aa).

The ATP site is built by Gly-86, Gly-88, Arg-89, Lys-109, Asp-121, Gly-122, Arg-172, and Arg-179. The active-site Proton acceptor is the Asp-248. The Mg(2+) site is built by Asn-249 and Asp-258. Position 258 (Asp-258) interacts with ATP.

Belongs to the SELO family. The cofactor is Mg(2+). It depends on Mn(2+) as a cofactor.

It carries out the reaction L-seryl-[protein] + ATP = 3-O-(5'-adenylyl)-L-seryl-[protein] + diphosphate. It catalyses the reaction L-threonyl-[protein] + ATP = 3-O-(5'-adenylyl)-L-threonyl-[protein] + diphosphate. The enzyme catalyses L-tyrosyl-[protein] + ATP = O-(5'-adenylyl)-L-tyrosyl-[protein] + diphosphate. The catalysed reaction is L-histidyl-[protein] + UTP = N(tele)-(5'-uridylyl)-L-histidyl-[protein] + diphosphate. It carries out the reaction L-seryl-[protein] + UTP = O-(5'-uridylyl)-L-seryl-[protein] + diphosphate. It catalyses the reaction L-tyrosyl-[protein] + UTP = O-(5'-uridylyl)-L-tyrosyl-[protein] + diphosphate. In terms of biological role, nucleotidyltransferase involved in the post-translational modification of proteins. It can catalyze the addition of adenosine monophosphate (AMP) or uridine monophosphate (UMP) to a protein, resulting in modifications known as AMPylation and UMPylation. The protein is Protein nucleotidyltransferase YdiU of Salmonella paratyphi C (strain RKS4594).